The chain runs to 143 residues: Fluoride-specific ion channel FluC (143 aa).

Helical transmembrane passes span 3-23 (AVVW…GSGL), 41-61 (WGTL…LIWL), 76-96 (IVGL…CLVF), and 103-123 (LMVG…VFLG). Residues G81 and T84 each contribute to the Na(+) site.

It belongs to the fluoride channel Fluc/FEX (TC 1.A.43) family.

The protein resides in the cell inner membrane. The catalysed reaction is fluoride(in) = fluoride(out). Its activity is regulated as follows. Na(+) is not transported, but it plays an essential structural role and its presence is essential for fluoride channel function. Fluoride-specific ion channel. Important for reducing fluoride concentration in the cell, thus reducing its toxicity. The protein is Fluoride-specific ion channel FluC of Xylella fastidiosa (strain 9a5c).